The chain runs to 106 residues: Urease subunit beta (106 aa).

The protein belongs to the urease beta subunit family. As to quaternary structure, heterotrimer of UreA (gamma), UreB (beta) and UreC (alpha) subunits. Three heterotrimers associate to form the active enzyme.

Its subcellular location is the cytoplasm. The enzyme catalyses urea + 2 H2O + H(+) = hydrogencarbonate + 2 NH4(+). The protein operates within nitrogen metabolism; urea degradation; CO(2) and NH(3) from urea (urease route): step 1/1. This is Urease subunit beta from Synechococcus sp. (strain CC9902).